Consider the following 488-residue polypeptide: UDP-N-acetylmuramate--L-alanine ligase (488 aa).

Residue 129–135 (GSHGKTT) coordinates ATP.

The protein belongs to the MurCDEF family.

Its subcellular location is the cytoplasm. The enzyme catalyses UDP-N-acetyl-alpha-D-muramate + L-alanine + ATP = UDP-N-acetyl-alpha-D-muramoyl-L-alanine + ADP + phosphate + H(+). It functions in the pathway cell wall biogenesis; peptidoglycan biosynthesis. Its function is as follows. Cell wall formation. This chain is UDP-N-acetylmuramate--L-alanine ligase, found in Prochlorococcus marinus (strain MIT 9303).